An 88-amino-acid polypeptide reads, in one-letter code: Small ribosomal subunit protein uS15 (88 aa).

Belongs to the universal ribosomal protein uS15 family. As to quaternary structure, part of the 30S ribosomal subunit. Forms a bridge to the 50S subunit in the 70S ribosome, contacting the 23S rRNA.

Functionally, one of the primary rRNA binding proteins, it binds directly to 16S rRNA where it helps nucleate assembly of the platform of the 30S subunit by binding and bridging several RNA helices of the 16S rRNA. In terms of biological role, forms an intersubunit bridge (bridge B4) with the 23S rRNA of the 50S subunit in the ribosome. This chain is Small ribosomal subunit protein uS15, found in Mycoplasmopsis agalactiae (strain NCTC 10123 / CIP 59.7 / PG2) (Mycoplasma agalactiae).